A 1274-amino-acid chain; its full sequence is DENN domain-containing protein 5B (1274 aa).

Ser-2 carries the N-acetylserine modification. Positions 39–244 (DELAGENFDQ…EVPLPPPGRS (206 aa)) constitute a uDENN domain. A phosphoserine mark is found at Ser-49 and Ser-178. The 137-residue stretch at 263–399 (ELPLSDYPLR…VDFIQELSEV (137 aa)) folds into the cDENN domain. In terms of domain architecture, dDENN spans 401–581 (VQFGIPPEGS…DNKIMSQWEE (181 aa)). The RUN 1 domain occupies 772–932 (LEENTLIASL…DYFCFTSVFT (161 aa)). Ser-822 bears the Phosphoserine mark. A helical membrane pass occupies residues 916 to 936 (LLSLNAVDYFCFTSVFTTIMI). A PLAT domain is found at 936–1044 (IPYRSVIIPI…DDGSLERILI (109 aa)). Thr-1062 carries the post-translational modification Phosphothreonine. Phosphoserine occurs at positions 1068, 1076, and 1079. The RUN 2 domain maps to 1118-1267 (TVLLCGENGL…QDFTIVLEGS (150 aa)).

This sequence belongs to the RAB6IP1 family.

It localises to the membrane. In terms of biological role, guanine nucleotide exchange factor (GEF) which may activate RAB39A and/or RAB39B. Promotes the exchange of GDP to GTP, converting inactive GDP-bound Rab proteins into their active GTP-bound form. The sequence is that of DENN domain-containing protein 5B (DENND5B) from Homo sapiens (Human).